Consider the following 219-residue polypeptide: UPF0173 metal-dependent hydrolase LSL_0324 (219 aa).

This sequence belongs to the UPF0173 family.

In Ligilactobacillus salivarius (strain UCC118) (Lactobacillus salivarius), this protein is UPF0173 metal-dependent hydrolase LSL_0324.